The following is a 570-amino-acid chain: Interleukin-1 receptor accessory protein (570 aa).

The first 20 residues, 1–20 (MGLLWYLMSLSFYGILQSHA), serve as a signal peptide directing secretion. Ig-like C2-type domains lie at 21–128 (SERC…VAFP), 139–230 (NSAM…RTVT), and 243–348 (PQIY…AKVK). Over 21–367 (SERCDDWGLD…VELACGFGAT (347 aa)) the chain is Extracellular. Cystine bridges form between Cys-24–Cys-122, Cys-47–Cys-114, Cys-137–Cys-181, Cys-160–Cys-212, and Cys-266–Cys-332. N-linked (GlcNAc...) asparagine glycosylation occurs at Asn-57. Residues 69–85 (IWYWTRQDRDLEEPINF) are essential for interaction with PTPRD. Asn-107, Asn-111, and Asn-118 each carry an N-linked (GlcNAc...) asparagine glycan. 3 N-linked (GlcNAc...) asparagine glycosylation sites follow: Asn-196, Asn-209, and Asn-299. Residues 368-388 (VFLVVVLIVVYHVYWLEMVLF) traverse the membrane as a helical segment. Topologically, residues 389–570 (YRAHFGTDET…GLSYSSLKNV (182 aa)) are cytoplasmic. In terms of domain architecture, TIR spans 403-546 (KEYDIYVSYA…RFWKQLQVAM (144 aa)). The active site involves Glu-482. Positions 550 to 570 (KSPRWSSNDKQGLSYSSLKNV) are disordered. Polar residues predominate over residues 553-570 (RWSSNDKQGLSYSSLKNV).

Belongs to the interleukin-1 receptor family. The interleukin-36 receptor complex is a heterodimer of IL1RL2 and IL1RAP; the association is inhibited by IL36RN. The interleukin-1 receptor complex is a heterodimer of IL1R1 and IL1RAP. Associates with IL1R2 to form a non-signaling interleukin-1 receptor complex. Interacts with IL-33-bound IL1RL1 to form the minimal interleukin-33 signaling complex with a 1:1:1 stoichiometry. Interacts with KIT (independently of stimulation with KITLG/SCF). A mast cell-specific KITLG/SCF-induced interleukin-33 signaling complex contains IL1RL1, IL1RAP, KIT and MYD88. Interacts (via the first immunoglobilin domain) with PTPRD (via the third immunoglobilin domain); induces pre- and postsynaptic differentiation of neurons. In terms of tissue distribution, detected in lung, brain, spleen, thymus and liver. Expressed in brain endothelial cells, astrocytes, microglia and neurons. Isoform 3 is predominantly expressed in brain; expressed in hippocampal neurons.

It localises to the cell membrane. It is found in the secreted. It carries out the reaction NAD(+) + H2O = ADP-D-ribose + nicotinamide + H(+). Coreceptor for IL1RL2 in the IL-36 signaling system. Coreceptor with IL1R1 in the IL-1 signaling system. Associates with IL1R1 bound to IL1B to form the high affinity interleukin-1 receptor complex which mediates interleukin-1-dependent activation of NF-kappa-B and other pathways. Signaling involves the recruitment of adapter molecules such as TOLLIP, MYD88, and IRAK1 or IRAK2 via the respective TIR domains of the receptor/coreceptor subunits. Recruits TOLLIP to the signaling complex. Does not bind to interleukin-1 alone; binding of IL1RN to IL1R1, prevents its association with IL1R1 to form a signaling complex. The cellular response is modulated through a non-signaling association with the membrane IL1R2 decoy receptor. Secreted forms (isoforms 2 and 3) associate with secreted ligand-bound IL1R2 and increase the affinity of secreted IL1R2 for IL1B; this complex formation may be the dominant mechanism for neutralization of IL1B by secreted/soluble receptors. Coreceptor for IL1RL1 in the IL-33 signaling system. Can bidirectionally induce pre- and postsynaptic differentiation of neurons by trans-synaptically binding to PTPRD. May play a role in IL1B-mediated costimulation of IFNG production from T-helper 1 (Th1) cells. Its function is as follows. Associates with secreted ligand-bound IL1R2 and increases the affinity of secreted IL1R2 for IL1B; this complex formation may be the dominant mechanism for neutralization of IL1B by secreted/soluble receptors. Enhances the ability of secreted IL1R1 to inhibit IL-33 signaling. Functionally, required for Src phosphorylation by IL1B. Required for IL1B-potentiated NMDA-induced calcium influx in neurons acting in cooperation with IL1R1 isoform 2 to mediate Akt kinase activation. This Mus musculus (Mouse) protein is Interleukin-1 receptor accessory protein (Il1rap).